The chain runs to 943 residues: Isoleucine--tRNA ligase (943 aa).

The 'HIGH' region signature appears at 58–68 (PYANGTIHIGH). Residue E567 coordinates L-isoleucyl-5'-AMP. A 'KMSKS' region motif is present at residues 608–612 (KMSKS). ATP is bound at residue K611. Residues C906, C909, C926, and C929 each coordinate Zn(2+).

It belongs to the class-I aminoacyl-tRNA synthetase family. IleS type 1 subfamily. In terms of assembly, monomer. It depends on Zn(2+) as a cofactor.

It localises to the cytoplasm. It carries out the reaction tRNA(Ile) + L-isoleucine + ATP = L-isoleucyl-tRNA(Ile) + AMP + diphosphate. Catalyzes the attachment of isoleucine to tRNA(Ile). As IleRS can inadvertently accommodate and process structurally similar amino acids such as valine, to avoid such errors it has two additional distinct tRNA(Ile)-dependent editing activities. One activity is designated as 'pretransfer' editing and involves the hydrolysis of activated Val-AMP. The other activity is designated 'posttransfer' editing and involves deacylation of mischarged Val-tRNA(Ile). The chain is Isoleucine--tRNA ligase from Pseudomonas fluorescens (strain Pf0-1).